The primary structure comprises 89 residues: Huwentoxin-IV (89 aa).

The first 24 residues, 1–24 (MVNMKASMFLALAGLVLLFVVCYA), serve as a signal peptide directing secretion. The propeptide occupies 25–52 (SESEEKEFSNELLSSVLAVDDNSKGEER). E53 is modified (pyrrolidone carboxylic acid (Glu); partial). 3 cysteine pairs are disulfide-bonded: C54-C69, C61-C76, and C68-C83. At I87 the chain carries Isoleucine amide.

It belongs to the neurotoxin 10 (Hwtx-1) family. 22 (Htx-4) subfamily. In terms of processing, two forms of huwentoxin-IV exist in the venom of H.schmidti, a non-N-terminally modified (HwTx-IV) and a naturally modified peptide with pyroglutamic acid residue at position 53 (mHwTx-IV). mHwTx-IV shows no observable difference with the unmodified toxin when applied to the TTX-S sodium channel of DRG neuron (IC(50)~50 nM) or when tested on hNav1.7/SCN9A (IC(50)=30.8 nM). In addition, similarly to the unmodified toxin, mHwTx-IV has only a weak affinity for lipid membranes. However, in contrast with HwTx-IV, which dissociates at moderate and high depolarization voltages (50-200 mV), mHwTx-IV inhibition of TTX-sensitive sodium channels is not reversed by strong depolarization voltages. In terms of tissue distribution, expressed by the venom gland.

Its subcellular location is the secreted. In terms of biological role, this lethal neurotoxin (without cyclization at position 53) inhibits neuronal voltage-gated sodium channel Nav1.2/SCN2A (IC(50)=10-150 nM), rNav1.3/SCN3A (IC(50)=338 nM), Nav1.6/SCN8A (IC(50)=117 nM), and hNav1.7/SCN9A (IC(50)=9.6-33 nM). It inhibits activation of sodium channel by trapping the voltage sensor of domain II (DIIS4) in the closed configuration. The toxin neither shifts the Nav1.7/SCN9A activation curve nor modifies the slope factor. It does not slow fast-inactivation of hNav1.7/SCN9A channels. In addition, it has only a weak affinity for lipid membranes. This toxin also exists with a pyroglutamate at position 53. The sole difference observed between modified (mHwTx-IV) and unmodified toxins is that moderate or high depolarization voltages (200 mV) permit the unmodified toxin to dissociate, whereas mHwTx-IV toxin does not dissociate, even at high depolarization voltages. These data indicate that mHwTx-IV strongly binds to voltage sensor of sodium channel even at extreme depolarization voltages. This Cyriopagopus schmidti (Chinese bird spider) protein is Huwentoxin-IV.